The chain runs to 3097 residues: Neural-cadherin (3097 aa).

The first 36 residues, 1–36 (MAARRCLNQLRQRYITNRFNICTCAIFLISLPFILA), serve as a signal peptide directing secretion. N-linked (GlcNAc...) asparagine glycosylation is found at N97 and N150. Positions 181–305 (VRENQPAGTR…LDENDNRPIF (125 aa)) constitute a Cadherin 1 domain. N-linked (GlcNAc...) asparagine glycans are attached at residues N325 and N426. Cadherin domains follow at residues 430–543 (HREK…PPYF), 554–651 (VQLN…APQF), 660–756 (IPEN…APKF), 766–858 (VDED…EPKF), 867–968 (VDEN…KPVF), 978–1078 (VEEG…PPLF), 1087–1183 (VKQD…PPVW), 1193–1299 (VKEN…IPLF), 1307–1414 (VLEG…PPYF), 1423–1514 (VDEN…PPVF), 1523–1630 (ITEE…APIF), 1639–1742 (VTEN…PPQF), 1749–1861 (TEVD…KPHF), 1870–1966 (VFED…APKF), and 1974–2085 (LPEH…QPGS). A glycan (N-linked (GlcNAc...) asparagine) is linked at N930. The N-linked (GlcNAc...) asparagine glycan is linked to N1266. Cystine bridges form between C2346/C2357, C2351/C2366, C2368/C2377, C2559/C2585, C2592/C2607, C2601/C2616, C2618/C2627, C2787/C2822, C2869/C2880, C2874/C2891, and C2893/C2902. An EGF-like 1 domain is found at 2346 to 2377 (CRTTPCHNGGRCVDTRFGPHCSCPVGYTGPRC). Positions 2379–2585 (QTTRSFRGNG…GLSRNSVAGC (207 aa)) constitute a Laminin G-like 1 domain. Residues 2592-2627 (CAQTETTARCWEHGNCVGSLSEARCHCRPGWTGPAC) form the EGF-like 2 domain. Residues 2631–2822 (TIPTTFKAQS…TMARNLEKGC (192 aa)) enclose the Laminin G-like 2 domain. The region spanning 2869–2902 (CLDMPCMNGATCINLEPRLRYRCICPDGFWGENC) is the EGF-like 3 domain. A helical transmembrane segment spans residues 2917-2937 (ALAAILVCLLIILILVLVFVV). The Cytoplasmic segment spans residues 2938–3097 (YNRRREAHIK…PNPHNTELEL (160 aa)).

In terms of tissue distribution, in the embryo, the protein first appears in the mesoderm at stage 9 and is present in the myoblasts and muscle fibers by stage 12 and stage 14, respectively. At stage 12 the protein is also located in the axons of the entire CNS, but not in the glial cells. In third instar larvae protein is expressed in the CNS neuropile, photoreceptor axons and precursors of adult muscles.

It localises to the cell membrane. Functionally, cadherins are calcium-dependent cell adhesion proteins. They preferentially interact with themselves in a homophilic manner in connecting cells; cadherins may thus contribute to the sorting of heterogeneous cell types. May associate with arm neural isoform and participate in the transmission of developmental information. This is Neural-cadherin (CadN) from Drosophila melanogaster (Fruit fly).